The primary structure comprises 470 residues: Poly(A) polymerase catalytic subunit (470 aa).

Catalysis depends on residues Asp-192 and Asp-194.

It belongs to the poxviridae poly(A) polymerase catalytic subunit family. In terms of assembly, heterodimer of a large (catalytic) subunit and a small (regulatory) subunit.

The enzyme catalyses RNA(n) + ATP = RNA(n)-3'-adenine ribonucleotide + diphosphate. In terms of biological role, polymerase that creates the 3'-poly(A) tail of mRNA's. This Molluscum contagiosum virus subtype 1 (MOCV) protein is Poly(A) polymerase catalytic subunit (PAPL).